The sequence spans 467 residues: FAD-dependent oxidoreductase dbaF (467 aa).

An N-terminal signal peptide occupies residues 1 to 20 (MKSVLASGALTLAFSLAALA). N96, N134, N337, N391, and N451 each carry an N-linked (GlcNAc...) asparagine glycan.

It belongs to the beta-cyclopiazonate dehydrogenase family. FAD is required as a cofactor.

It participates in secondary metabolite biosynthesis. Its function is as follows. FAD-dependent oxidoreductase; part of the gene cluster that mediates the biosynthesis of the antibiotic 2,4-dihydroxy-3-methyl-6-(2-oxopropyl)benzaldehyde (DHMBA) and its derivatives. The direct non-reducing polyketide synthase dbaI product is 2,4-dihydroxy-3-methyl-6-(2-oxopropyl)benzaldehyde (DHMBA), produced by condensation of one acetyl-CoA starter unit with 4 malonyl-CoA units and one methylation step. The FAD-dependent monooxygenase dbaH is responsible for the synthesis of yellow pigments derived from the oxidation of DHMBA. The roles of dbaB, C, E and F have still to be determined. The sequence is that of FAD-dependent oxidoreductase dbaF from Emericella nidulans (strain FGSC A4 / ATCC 38163 / CBS 112.46 / NRRL 194 / M139) (Aspergillus nidulans).